A 364-amino-acid chain; its full sequence is Fructose-1,6-bisphosphatase class 1 3 (364 aa).

Mg(2+) is bound by residues Glu101, Asp123, Leu125, and Asp126. Residues 126–129 (DGSS) and Asn218 each bind substrate. Glu290 serves as a coordination point for Mg(2+).

It belongs to the FBPase class 1 family. In terms of assembly, homotetramer. It depends on Mg(2+) as a cofactor.

Its subcellular location is the cytoplasm. It carries out the reaction beta-D-fructose 1,6-bisphosphate + H2O = beta-D-fructose 6-phosphate + phosphate. It participates in carbohydrate biosynthesis; gluconeogenesis. The sequence is that of Fructose-1,6-bisphosphatase class 1 3 from Cupriavidus necator (strain ATCC 17699 / DSM 428 / KCTC 22496 / NCIMB 10442 / H16 / Stanier 337) (Ralstonia eutropha).